Consider the following 328-residue polypeptide: L-serine dehydratase/L-threonine deaminase (328 aa).

Residue K41 is modified to N6-(pyridoxal phosphate)lysine. Residue P128 coordinates pyridoxal 5'-phosphate.

Belongs to the serine/threonine dehydratase family. Homodimer. The cofactor is pyridoxal 5'-phosphate. Predominantly expressed in the perivenous regions of the liver.

The protein resides in the cytoplasm. It carries out the reaction L-serine = pyruvate + NH4(+). The catalysed reaction is L-threonine = 2-oxobutanoate + NH4(+). It participates in carbohydrate biosynthesis; gluconeogenesis. Its function is as follows. Catalyzes the pyridoxal-phosphate-dependent dehydrative deamination of L-threonine and L-serine to ammonia and alpha-ketobutyrate and pyruvate, respectively. This is L-serine dehydratase/L-threonine deaminase (SDS) from Homo sapiens (Human).